Here is a 320-residue protein sequence, read N- to C-terminus: Undecaprenyl-diphosphatase (320 aa).

A run of 8 helical transmembrane segments spans residues 9–29 (FVLISAVSAALSVVLFPLEVF), 82–102 (GVAFTAIIQLGSIAAVLWYFW), 130–150 (LGIVLGTIPIVFFGLLIKTFI), 161–181 (LGAIAVASIVMSLLLGVGEKL), 191–211 (LTMQDGLLMGLAQALTLIPGV), 236–256 (FLLGIPAITLAGLVELKDLLA), 265–285 (LPLIMGVISAAIFSYLAIAGL), and 296–316 (VFIWYRLVFGVAILGAISAGI).

It belongs to the UppP family.

Its subcellular location is the cell inner membrane. The catalysed reaction is di-trans,octa-cis-undecaprenyl diphosphate + H2O = di-trans,octa-cis-undecaprenyl phosphate + phosphate + H(+). In terms of biological role, catalyzes the dephosphorylation of undecaprenyl diphosphate (UPP). Confers resistance to bacitracin. The chain is Undecaprenyl-diphosphatase from Nostoc sp. (strain PCC 7120 / SAG 25.82 / UTEX 2576).